We begin with the raw amino-acid sequence, 276 residues long: MAIKKFKPTSPGRRQMTVSTFAEITATEPYKPLVEPLKKTGGRNNQGRLTVRHRGGGHKRLYRVIDFKRDKDGIPGRVATIEYDPNRSANIALINYADGEKRYILAPENLQVGDQVISGPEADIKVGNALPLSQIPVGTMVHNVELKPGKGGQMARSAGAGAQLMAKEGGYALLRLPSGEVRKVQESCRATVGQVGNLDWENINIGKAGRKRWLGIRPTVRGVVMNPVDHPHGGGEGRAPVGRKHPVTPWGKPAMGAKTRKKRKLSDKLIVKPRNK.

Residues 225-276 (MNPVDHPHGGGEGRAPVGRKHPVTPWGKPAMGAKTRKKRKLSDKLIVKPRNK) form a disordered region. A compositionally biased stretch (basic residues) spans 258–276 (KTRKKRKLSDKLIVKPRNK).

This sequence belongs to the universal ribosomal protein uL2 family. In terms of assembly, part of the 50S ribosomal subunit. Forms a bridge to the 30S subunit in the 70S ribosome.

One of the primary rRNA binding proteins. Required for association of the 30S and 50S subunits to form the 70S ribosome, for tRNA binding and peptide bond formation. It has been suggested to have peptidyltransferase activity; this is somewhat controversial. Makes several contacts with the 16S rRNA in the 70S ribosome. This Moorella thermoacetica (strain ATCC 39073 / JCM 9320) protein is Large ribosomal subunit protein uL2.